The chain runs to 314 residues: Olfactory receptor 5P76 (314 aa).

Over 1–28 (MAFLEDGNHTAVTGFILLGLTDDPVLRV) the chain is Extracellular. N-linked (GlcNAc...) asparagine glycosylation is present at N8. Residues 29-49 (VLFVIILCIYLVTVSGNLSTI) form a helical membrane-spanning segment. The Cytoplasmic portion of the chain corresponds to 50-57 (LLIRVSSQ). A helical membrane pass occupies residues 58-78 (LHHPMYFFLSHLASADIGYSS). The Extracellular portion of the chain corresponds to 79–102 (SVTPNMLVNFLVERNTISYLGCGI). C100 and C192 are oxidised to a cystine. A helical membrane pass occupies residues 103-123 (QLGSAVFFGTVECFLLAAMAY). At 124-136 (DRFIAICSPLLYS) the chain is on the cytoplasmic side. Residues 137–157 (NKMSTQVCVQLLVGSYIGGFL) form a helical membrane-spanning segment. Residues 158–199 (NASSFTLSFFSLVFCGPNRVNHFFCDFAPLVKLSCSDVSVPA) are Extracellular-facing. The chain crosses the membrane as a helical span at residues 200–220 (VVPSFTAGSIIIVTIFVIAVS). At 221–240 (YIYILITILKMRSTEGRQKA) the chain is on the cytoplasmic side. The chain crosses the membrane as a helical span at residues 241 to 261 (FSTCTSHLTAVTLFYGTITFI). At 262 to 274 (YVMPKSSYSTDQN) the chain is on the extracellular side. A helical membrane pass occupies residues 275-295 (KVVSVFYMVVVPMLNPLIYSL). The Cytoplasmic segment spans residues 296 to 314 (RNKEIKGALKRQLAKNTFS).

Belongs to the G-protein coupled receptor 1 family.

The protein resides in the cell membrane. Functionally, potential odorant receptor. The chain is Olfactory receptor 5P76 from Mus musculus (Mouse).